The sequence spans 358 residues: Aromatic amino acid aminotransferase (358 aa).

N6-(pyridoxal phosphate)lysine is present on K214.

Belongs to the class-II pyridoxal-phosphate-dependent aminotransferase family. Homodimer. The cofactor is pyridoxal 5'-phosphate.

It carries out the reaction an aromatic L-alpha-amino acid + 2-oxoglutarate = an aromatic oxo-acid + L-glutamate. Its function is as follows. Aminotransferase that catalyzes the conversion of aromatic amino acids and 2-oxoglutarate into corresponding aromatic oxo acids and L-glutamate. This is Aromatic amino acid aminotransferase from Rhodococcus jostii (strain RHA1).